The primary structure comprises 368 residues: Type 2 DNA topoisomerase 6 subunit A (368 aa).

Residues Thr-9–Ala-148 enclose the Topo IIA-type catalytic domain. Residue Tyr-103 is the O-(5'-phospho-DNA)-tyrosine intermediate of the active site. Mg(2+) is bound by residues Glu-201 and Asp-253.

Belongs to the TOP6A family. Homodimer. Heterotetramer of two Top6A and two Top6B chains. Requires Mg(2+) as cofactor.

It carries out the reaction ATP-dependent breakage, passage and rejoining of double-stranded DNA.. Functionally, relaxes both positive and negative superturns and exhibits a strong decatenase activity. This is Type 2 DNA topoisomerase 6 subunit A from Natronomonas pharaonis (strain ATCC 35678 / DSM 2160 / CIP 103997 / JCM 8858 / NBRC 14720 / NCIMB 2260 / Gabara) (Halobacterium pharaonis).